The primary structure comprises 238 residues: Tyrosine recombinase XerD-like (238 aa).

A Core-binding (CB) domain is found at 1–75; the sequence is MKLPNEIEEY…SANQYFLFLY (75 aa). Residues 90 to 238 enclose the Tyr recombinase domain; sequence VQKKTQSSES…TITALEKYYR (149 aa). Active-site residues include Lys-154 and Arg-204. Tyr-236 serves as the catalytic O-(3'-phospho-DNA)-tyrosine intermediate.

This sequence belongs to the 'phage' integrase family. XerD-like subfamily.

It is found in the cytoplasm. Functionally, putative tyrosine recombinase. Not involved in the cutting and rejoining of the recombining DNA molecules on dif(SL) site. The polypeptide is Tyrosine recombinase XerD-like (Lactococcus lactis subsp. cremoris (strain SK11)).